The sequence spans 80 residues: Protein UL148B (80 aa).

Residues 10 to 30 form a helical membrane-spanning segment; sequence AICVGLVMGVTVIASCALLVF.

The protein localises to the host membrane. The sequence is that of Protein UL148B (UL148B) from Homo sapiens (Human).